A 495-amino-acid polypeptide reads, in one-letter code: Putative aldehyde dehydrogenase AldA (495 aa).

Residue 212–218 (GKGSESG) coordinates NAD(+). Catalysis depends on residues Glu256 and Cys290.

The protein belongs to the aldehyde dehydrogenase family.

The enzyme catalyses an aldehyde + NAD(+) + H2O = a carboxylate + NADH + 2 H(+). The chain is Putative aldehyde dehydrogenase AldA (aldA) from Staphylococcus aureus (strain MRSA252).